Reading from the N-terminus, the 555-residue chain is Anaerobic magnesium-protoporphyrin IX monomethyl ester cyclase (555 aa).

Residues 9–143 form the B12-binding domain; the sequence is NYHSGGAEIA…TAVDQGRFMA (135 aa). Positions 191 to 416 constitute a Radical SAM core domain; the sequence is PMNKRVAIPN…MKPDAMDRGE (226 aa). Positions 205, 209, and 212 each coordinate [4Fe-4S] cluster.

This sequence belongs to the BchE family. The cofactor is [4Fe-4S] cluster. Adenosylcob(III)alamin serves as cofactor.

The enzyme catalyses Mg-protoporphyrin IX 13-monomethyl ester + 3 S-adenosyl-L-methionine + H2O = 3,8-divinyl protochlorophyllide a + 3 5'-deoxyadenosine + 3 L-methionine + 4 H(+). It functions in the pathway porphyrin-containing compound metabolism; bacteriochlorophyll biosynthesis (light-independent). In terms of biological role, involved in the tetrapyrrole biosynthetic pathways leading to chlorophyll and bacteriochlorophyll (BChl). Catalyzes the anaerobic formation of the isocyclic ring (E-ring) in Mg-protoporphyrin monomethyl ester (MPE) to yield protochlorophyllide a (PChlide a) via a six-electron oxidation and the formation of an oxo group at position C13 using oxygen from a water molecule. This chain is Anaerobic magnesium-protoporphyrin IX monomethyl ester cyclase (bchE), found in Rubrivivax gelatinosus (Rhodocyclus gelatinosus).